We begin with the raw amino-acid sequence, 289 residues long: 4-diphosphocytidyl-2-C-methyl-D-erythritol kinase (289 aa).

Lys-16 is an active-site residue. 99 to 109 (PMGGGIGGGSS) provides a ligand contact to ATP. The active site involves Asp-141.

It belongs to the GHMP kinase family. IspE subfamily.

It catalyses the reaction 4-CDP-2-C-methyl-D-erythritol + ATP = 4-CDP-2-C-methyl-D-erythritol 2-phosphate + ADP + H(+). Its pathway is isoprenoid biosynthesis; isopentenyl diphosphate biosynthesis via DXP pathway; isopentenyl diphosphate from 1-deoxy-D-xylulose 5-phosphate: step 3/6. Functionally, catalyzes the phosphorylation of the position 2 hydroxy group of 4-diphosphocytidyl-2C-methyl-D-erythritol. The protein is 4-diphosphocytidyl-2-C-methyl-D-erythritol kinase of Ralstonia nicotianae (strain ATCC BAA-1114 / GMI1000) (Ralstonia solanacearum).